The following is a 513-amino-acid chain: ATP synthase subunit alpha (513 aa).

Position 169–176 (169–176 (GDRQTGKT)) interacts with ATP.

The protein belongs to the ATPase alpha/beta chains family. As to quaternary structure, F-type ATPases have 2 components, CF(1) - the catalytic core - and CF(0) - the membrane proton channel. CF(1) has five subunits: alpha(3), beta(3), gamma(1), delta(1), epsilon(1). CF(0) has three main subunits: a(1), b(2) and c(9-12). The alpha and beta chains form an alternating ring which encloses part of the gamma chain. CF(1) is attached to CF(0) by a central stalk formed by the gamma and epsilon chains, while a peripheral stalk is formed by the delta and b chains.

It localises to the cell inner membrane. It carries out the reaction ATP + H2O + 4 H(+)(in) = ADP + phosphate + 5 H(+)(out). Its function is as follows. Produces ATP from ADP in the presence of a proton gradient across the membrane. The alpha chain is a regulatory subunit. The protein is ATP synthase subunit alpha of Salmonella arizonae (strain ATCC BAA-731 / CDC346-86 / RSK2980).